The sequence spans 255 residues: DNA repair protein RecO (255 aa).

Belongs to the RecO family.

Its function is as follows. Involved in DNA repair and RecF pathway recombination. This chain is DNA repair protein RecO, found in Listeria welshimeri serovar 6b (strain ATCC 35897 / DSM 20650 / CCUG 15529 / CIP 8149 / NCTC 11857 / SLCC 5334 / V8).